The following is a 311-amino-acid chain: Pyrimidine-specific ribonucleoside hydrolase RihA (311 aa).

The active site involves H240.

Belongs to the IUNH family. RihA subfamily.

Functionally, hydrolyzes cytidine or uridine to ribose and cytosine or uracil, respectively. The chain is Pyrimidine-specific ribonucleoside hydrolase RihA from Salmonella choleraesuis (strain SC-B67).